We begin with the raw amino-acid sequence, 65 residues long: Conotoxin TsMRCL-05 (65 aa).

The N-terminal stretch at 1-22 (MHCLPVLVILLLLIASTPSVDA) is a signal peptide. Positions 23-52 (RPNPKDDVPLASFHGAVNAKRYLRTLWNSR) are excised as a propeptide. Ile64 carries the post-translational modification Isoleucine amide.

This sequence belongs to the conotoxin T superfamily. Post-translationally, contains 2 disulfide bonds that can be either 'C1-C3, C2-C4' or 'C1-C4, C2-C3', since these disulfide connectivities have been observed for conotoxins with cysteine framework V (for examples, see AC P0DQQ7 and AC P81755). Expressed by the venom duct.

It is found in the secreted. The protein is Conotoxin TsMRCL-05 of Conus tessulatus (Tessellate cone).